The primary structure comprises 130 residues: Small ribosomal subunit protein uS8 (130 aa).

Belongs to the universal ribosomal protein uS8 family. In terms of assembly, part of the 30S ribosomal subunit. Contacts proteins S5 and S12.

One of the primary rRNA binding proteins, it binds directly to 16S rRNA central domain where it helps coordinate assembly of the platform of the 30S subunit. The polypeptide is Small ribosomal subunit protein uS8 (Buchnera aphidicola subsp. Acyrthosiphon pisum (strain 5A)).